The primary structure comprises 232 residues: Large ribosomal subunit protein uL1 (232 aa).

It belongs to the universal ribosomal protein uL1 family. Part of the 50S ribosomal subunit.

In terms of biological role, binds directly to 23S rRNA. The L1 stalk is quite mobile in the ribosome, and is involved in E site tRNA release. Its function is as follows. Protein L1 is also a translational repressor protein, it controls the translation of the L11 operon by binding to its mRNA. In Burkholderia cenocepacia (strain HI2424), this protein is Large ribosomal subunit protein uL1.